A 681-amino-acid polypeptide reads, in one-letter code: Transcriptional regulator prz1 (681 aa).

The span at 1-15 (MERQRSEEANRRFKD) shows a compositional bias: basic and acidic residues. Disordered stretches follow at residues 1–29 (MERQ…SKPD), 66–96 (NPSK…DSYP), 340–372 (SHQS…NSPF), 410–433 (PQIN…ANPL), and 520–563 (KIEN…AKSE). 2 stretches are compositionally biased toward polar residues: residues 66 to 86 (NPSK…FKTS) and 340 to 358 (SHQS…LNSE). Low complexity predominate over residues 416-428 (PSSPSKSQSGPSL). Residues 528 to 549 (SNDYLSVRNTRPRSRSLNSLVG) are compositionally biased toward polar residues. Phosphoserine occurs at positions 543 and 546. The span at 550-559 (NKSENSSSSK) shows a compositional bias: low complexity. 2 C2H2-type zinc fingers span residues 570-594 (YVCT…MNTH) and 600-622 (FQCS…EQLH). The C2H2-type 3; degenerate zinc-finger motif lies at 628 to 650 (FACVTCNQRFARMDALNRHYKSE). The segment at 662 to 681 (RGIQVPPSRKTAVASTSKQK) is disordered.

It belongs to the EGR C2H2-type zinc-finger protein family. Post-translationally, phosphorylated. Dephosphorylated by calcineurin which leads to rapid translocation from the cytoplasm to the nucleus.

It localises to the nucleus. It is found in the cytoplasm. Involved in the regulation of calcium ion homeostasis. Binds to the calcineurin-dependent response element. Transcriptionally regulates pmc1. The chain is Transcriptional regulator prz1 (prz1) from Schizosaccharomyces pombe (strain 972 / ATCC 24843) (Fission yeast).